We begin with the raw amino-acid sequence, 385 residues long: MFKKTKITILGATGSIGDSTLAVIRETNDFEVFALTAFSNVEKLAELCQEFKPKFAVVPDLSKKQKLQSLVTDVEVLVGESGLEKVSSLAEIDIVMSAIVGIAGLKPTFAAAKAGKKILLANKESLVTAGHLLIDEVVKNNAQLIPVDSEHNAIFQCIDNHDKKCLPEIDKIILTASGGPFRDKQLHELTDVTPEQACNHPNWQMGRKISVDSSTMVNKALEVIEAYWLFSVSADKIGVLIHPQSVTHSMVRYVDGSYIAQLGVPDMKTPIANAMYYPKRGSVNVESLDFTKYQLTFREACFERFEALKIVFNNLQNKNYAANIVFNAANEELVAAFLNKKIKYLEIIEVNKKVTKELNFENPKNIEEVFEIDRKTREYVDSVLG.

Residues threonine 13, glycine 14, serine 15, isoleucine 16, asparagine 40, and asparagine 122 each contribute to the NADPH site. Position 123 (lysine 123) interacts with 1-deoxy-D-xylulose 5-phosphate. Glutamate 124 contacts NADPH. Mn(2+) is bound at residue aspartate 148. The 1-deoxy-D-xylulose 5-phosphate site is built by serine 149, glutamate 150, serine 177, and histidine 200. Residue glutamate 150 coordinates Mn(2+). Glycine 206 serves as a coordination point for NADPH. 4 residues coordinate 1-deoxy-D-xylulose 5-phosphate: serine 213, asparagine 218, lysine 219, and glutamate 222. Glutamate 222 contributes to the Mn(2+) binding site.

It belongs to the DXR family. It depends on Mg(2+) as a cofactor. The cofactor is Mn(2+).

It carries out the reaction 2-C-methyl-D-erythritol 4-phosphate + NADP(+) = 1-deoxy-D-xylulose 5-phosphate + NADPH + H(+). The protein operates within isoprenoid biosynthesis; isopentenyl diphosphate biosynthesis via DXP pathway; isopentenyl diphosphate from 1-deoxy-D-xylulose 5-phosphate: step 1/6. Its function is as follows. Catalyzes the NADPH-dependent rearrangement and reduction of 1-deoxy-D-xylulose-5-phosphate (DXP) to 2-C-methyl-D-erythritol 4-phosphate (MEP). The chain is 1-deoxy-D-xylulose 5-phosphate reductoisomerase from Francisella tularensis subsp. tularensis (strain WY96-3418).